The chain runs to 353 residues: Photosystem II D2 protein (353 aa).

Threonine 2 is modified (N-acetylthreonine). At threonine 2 the chain carries Phosphothreonine. The chain crosses the membrane as a helical span at residues 41–61 (CAYFSLGGWLTGTTFVTSWYT). Histidine 118 lines the chlorophyll a pocket. A helical transmembrane segment spans residues 125–141 (GFMLRQFELARSVQLRP). Glutamine 130 and asparagine 143 together coordinate pheophytin a. Residues 153 to 166 (VFVSVFLIYPLGQS) traverse the membrane as a helical segment. Histidine 198 is a chlorophyll a binding site. Residues 208-228 (AALLCAIHGATVENTLFEDGD) form a helical membrane-spanning segment. 2 residues coordinate a plastoquinone: histidine 215 and phenylalanine 262. Histidine 215 lines the Fe cation pocket. Position 269 (histidine 269) interacts with Fe cation. A helical transmembrane segment spans residues 279–295 (GLWMSAIGVVGLALNLR).

The protein belongs to the reaction center PufL/M/PsbA/D family. As to quaternary structure, PSII is composed of 1 copy each of membrane proteins PsbA, PsbB, PsbC, PsbD, PsbE, PsbF, PsbH, PsbI, PsbJ, PsbK, PsbL, PsbM, PsbT, PsbX, PsbY, PsbZ, Psb30/Ycf12, at least 3 peripheral proteins of the oxygen-evolving complex and a large number of cofactors. It forms dimeric complexes. The D1/D2 heterodimer binds P680, chlorophylls that are the primary electron donor of PSII, and subsequent electron acceptors. It shares a non-heme iron and each subunit binds pheophytin, quinone, additional chlorophylls, carotenoids and lipids. There is also a Cl(-1) ion associated with D1 and D2, which is required for oxygen evolution. The PSII complex binds additional chlorophylls, carotenoids and specific lipids. is required as a cofactor.

Its subcellular location is the plastid. The protein localises to the chloroplast thylakoid membrane. It carries out the reaction 2 a plastoquinone + 4 hnu + 2 H2O = 2 a plastoquinol + O2. Photosystem II (PSII) is a light-driven water:plastoquinone oxidoreductase that uses light energy to abstract electrons from H(2)O, generating O(2) and a proton gradient subsequently used for ATP formation. It consists of a core antenna complex that captures photons, and an electron transfer chain that converts photonic excitation into a charge separation. The D1/D2 (PsbA/PsbD) reaction center heterodimer binds P680, the primary electron donor of PSII as well as several subsequent electron acceptors. D2 is needed for assembly of a stable PSII complex. This Chara vulgaris (Common stonewort) protein is Photosystem II D2 protein.